The sequence spans 317 residues: Melanocyte-stimulating hormone receptor (317 aa).

Over 1–37 (MPVQGSLRSLVGAVNSTPTASPHLRPATNQTEPQCLE) the chain is Extracellular. An N-linked (GlcNAc...) asparagine glycan is attached at asparagine 29. The helical transmembrane segment at 38-63 (VSVPVGLFLCLGLVSLVENTLVVAVI) threads the bilayer. Topologically, residues 64-72 (AKNRNLHSP) are cytoplasmic. The helical transmembrane segment at 73-93 (MYCFICCLALSDLLVSVSNVL) threads the bilayer. The Extracellular portion of the chain corresponds to 94 to 118 (KTAVLLLLEAGALAAQATVVQQLGN). The helical transmembrane segment at 119 to 140 (VINMLICSSMVSSLCFLGAIAM) threads the bilayer. Residues 141-163 (DRYISIFYALRYHSIVTLARARR) are Cytoplasmic-facing. A helical membrane pass occupies residues 164–183 (AIAAVWVASILSSILFFTYY). Residues 184–191 (DRTAALLC) lie on the Extracellular side of the membrane. The helical transmembrane segment at 192 to 211 (LVVFFLAMLVLMAVLYVHML) threads the bilayer. Residues 212 to 240 (TQACQHAQGIARLHKRQHPVQQGWGLKGA) lie on the Cytoplasmic side of the membrane. Residues 241-266 (ATLAVLLGVFFLCWGPLFLHLTLIAV) form a helical membrane-spanning segment. At 267–279 (CPQHPTCNCIVKN) the chain is on the extracellular side. A helical membrane pass occupies residues 280 to 300 (FKLFLALIICNAIVDPLIYAF). Residues 301–317 (RSQELRKTLKEVLLFSW) lie on the Cytoplasmic side of the membrane.

Belongs to the G-protein coupled receptor 1 family. As to quaternary structure, interacts with MGRN1, but does not undergo MGRN1-mediated ubiquitination; this interaction competes with GNAS-binding and thus inhibits agonist-induced cAMP production. Interacts with OPN3; the interaction results in a decrease in MC1R-mediated cAMP signaling and ultimately a decrease in melanin production in melanocytes.

The protein localises to the cell membrane. Functionally, receptor for MSH (alpha, beta and gamma) and ACTH. The activity of this receptor is mediated by G proteins which activate adenylate cyclase. Mediates melanogenesis, the production of eumelanin (black/brown) and phaeomelanin (red/yellow), via regulation of cAMP signaling in melanocytes. This chain is Melanocyte-stimulating hormone receptor (MC1R), found in Varecia rubra (Red ruffed lemur).